Consider the following 141-residue polypeptide: Hemoglobin subunit alpha (141 aa).

Residues 1 to 141 (VLSSTDKSNV…VSTVLTSKYR (141 aa)) form the Globin domain. A Phosphoserine modification is found at Ser-3. N6-succinyllysine is present on residues Lys-7 and Lys-11. N6-acetyllysine; alternate is present on Lys-16. Lys-16 bears the N6-succinyllysine; alternate mark. Position 24 is a phosphotyrosine (Tyr-24). Position 35 is a phosphoserine (Ser-35). N6-succinyllysine is present on Lys-40. His-58 provides a ligand contact to O2. Residue His-87 participates in heme b binding. Phosphoserine is present on Ser-102. Thr-108 carries the phosphothreonine modification. Residues Ser-124 and Ser-131 each carry the phosphoserine modification. Phosphothreonine is present on residues Thr-134 and Thr-137. The residue at position 138 (Ser-138) is a Phosphoserine.

Belongs to the globin family. As to quaternary structure, heterotetramer of two alpha chains and two beta chains. As to expression, red blood cells.

Functionally, involved in oxygen transport from the lung to the various peripheral tissues. In terms of biological role, hemopressin acts as an antagonist peptide of the cannabinoid receptor CNR1. Hemopressin-binding efficiently blocks cannabinoid receptor CNR1 and subsequent signaling. The polypeptide is Hemoglobin subunit alpha (HBA) (Pteropus poliocephalus (Grey-headed flying fox)).